Reading from the N-terminus, the 108-residue chain is Peptidyl-prolyl cis-trans isomerase FKBP1A (108 aa).

The region spanning 20-108 (GQTCVVHYTG…IFDVELLKLE (89 aa)) is the PPIase FKBP-type domain. K53 carries the post-translational modification N6-acetyllysine; alternate. Position 53 is an N6-succinyllysine; alternate (K53).

It belongs to the FKBP-type PPIase family. FKBP1 subfamily. As to quaternary structure, interacts with TGFBR1; prevents TGFBR1 phosphorylation by TGFBR2 and stabilizes it in the inactive conformation. Interacts with ACVR1B and SMAD7. Identified in a complex composed of RYR1, PDE4D, PKA, FKBP1A and protein phosphatase 1 (PP1). Interacts directly with RYR2 and RYR3. Interacts with GLMN; rapamycin and FK506 abolish the interaction with GLMN in a dose dependent manner. Interacts directly with RYR1.

It is found in the cytoplasm. Its subcellular location is the cytosol. It localises to the sarcoplasmic reticulum membrane. The enzyme catalyses [protein]-peptidylproline (omega=180) = [protein]-peptidylproline (omega=0). Its activity is regulated as follows. Inhibited by both FK506 and rapamycin. Keeps in an inactive conformation TGFBR1, the TGF-beta type I serine/threonine kinase receptor, preventing TGF-beta receptor activation in absence of ligand. May modulate the RYR1 calcium channel activity. PPIases accelerate the folding of proteins. It catalyzes the cis-trans isomerization of proline imidic peptide bonds in oligopeptides. In Bos taurus (Bovine), this protein is Peptidyl-prolyl cis-trans isomerase FKBP1A (FKBP1A).